A 376-amino-acid chain; its full sequence is 3-dehydroquinate synthase (376 aa).

NAD(+) contacts are provided by residues 115–119, 139–140, K152, and K161; these read GVIGD and TS. 3 residues coordinate Zn(2+): E194, H256, and H275.

The protein belongs to the sugar phosphate cyclases superfamily. Dehydroquinate synthase family. The cofactor is Co(2+). Requires Zn(2+) as cofactor. It depends on NAD(+) as a cofactor.

It is found in the cytoplasm. It carries out the reaction 7-phospho-2-dehydro-3-deoxy-D-arabino-heptonate = 3-dehydroquinate + phosphate. The protein operates within metabolic intermediate biosynthesis; chorismate biosynthesis; chorismate from D-erythrose 4-phosphate and phosphoenolpyruvate: step 2/7. In terms of biological role, catalyzes the conversion of 3-deoxy-D-arabino-heptulosonate 7-phosphate (DAHP) to dehydroquinate (DHQ). This Rhizobium johnstonii (strain DSM 114642 / LMG 32736 / 3841) (Rhizobium leguminosarum bv. viciae) protein is 3-dehydroquinate synthase.